We begin with the raw amino-acid sequence, 720 residues long: Ornithine decarboxylase (720 aa).

Lys-354 is modified (N6-(pyridoxal phosphate)lysine).

The protein belongs to the Orn/Lys/Arg decarboxylase class-I family. Pyridoxal 5'-phosphate serves as cofactor.

The catalysed reaction is L-ornithine + H(+) = putrescine + CO2. The sequence is that of Ornithine decarboxylase (speF) from Haemophilus influenzae (strain ATCC 51907 / DSM 11121 / KW20 / Rd).